Consider the following 598-residue polypeptide: Probable translation initiation factor IF-2 (598 aa).

One can recognise a tr-type G domain in the interval Leu-3–Lys-225. Positions Gly-12–Thr-19 are G1. Gly-12–Thr-19 is a GTP binding site. Residues Gly-37–His-41 form a G2 region. The G3 stretch occupies residues Asp-76–Gly-79. GTP is bound by residues Asp-76 to His-80 and Asn-130 to Asp-133. The tract at residues Asn-130–Asp-133 is G4. A G5 region spans residues Ser-200–Ile-202.

It belongs to the TRAFAC class translation factor GTPase superfamily. Classic translation factor GTPase family. IF-2 subfamily.

Its function is as follows. Function in general translation initiation by promoting the binding of the formylmethionine-tRNA to ribosomes. Seems to function along with eIF-2. The polypeptide is Probable translation initiation factor IF-2 (Methanococcus vannielii (strain ATCC 35089 / DSM 1224 / JCM 13029 / OCM 148 / SB)).